Reading from the N-terminus, the 225-residue chain is 7-cyano-7-deazaguanine synthase (225 aa).

9 to 19 provides a ligand contact to ATP; the sequence is LSGGLDSATCL. Cysteine 189, cysteine 199, cysteine 202, and cysteine 205 together coordinate Zn(2+).

The protein belongs to the QueC family. Requires Zn(2+) as cofactor.

It catalyses the reaction 7-carboxy-7-deazaguanine + NH4(+) + ATP = 7-cyano-7-deazaguanine + ADP + phosphate + H2O + H(+). Its pathway is purine metabolism; 7-cyano-7-deazaguanine biosynthesis. Its function is as follows. Catalyzes the ATP-dependent conversion of 7-carboxy-7-deazaguanine (CDG) to 7-cyano-7-deazaguanine (preQ(0)). This Dechloromonas aromatica (strain RCB) protein is 7-cyano-7-deazaguanine synthase.